The sequence spans 218 residues: Imidazole glycerol phosphate synthase subunit HisH (218 aa).

Residues 1–213 enclose the Glutamine amidotransferase type-1 domain; it reads MTTIIDYGIG…AALPTTEEAG (213 aa). Cys79 (nucleophile) is an active-site residue. Catalysis depends on residues His188 and Glu190.

Heterodimer of HisH and HisF.

Its subcellular location is the cytoplasm. The catalysed reaction is 5-[(5-phospho-1-deoxy-D-ribulos-1-ylimino)methylamino]-1-(5-phospho-beta-D-ribosyl)imidazole-4-carboxamide + L-glutamine = D-erythro-1-(imidazol-4-yl)glycerol 3-phosphate + 5-amino-1-(5-phospho-beta-D-ribosyl)imidazole-4-carboxamide + L-glutamate + H(+). It catalyses the reaction L-glutamine + H2O = L-glutamate + NH4(+). It participates in amino-acid biosynthesis; L-histidine biosynthesis; L-histidine from 5-phospho-alpha-D-ribose 1-diphosphate: step 5/9. Its function is as follows. IGPS catalyzes the conversion of PRFAR and glutamine to IGP, AICAR and glutamate. The HisH subunit catalyzes the hydrolysis of glutamine to glutamate and ammonia as part of the synthesis of IGP and AICAR. The resulting ammonia molecule is channeled to the active site of HisF. This is Imidazole glycerol phosphate synthase subunit HisH from Salinibacter ruber (strain DSM 13855 / M31).